We begin with the raw amino-acid sequence, 203 residues long: Inactive ribonuclease-like protein 9 (203 aa).

An N-terminal signal peptide occupies residues 1–25 (MRTPITTHSLLLLLLLQQLLQPVQL). Disulfide bonds link C96-C151, C114-C166, and C121-C128. N129 and N141 each carry an N-linked (GlcNAc...) asparagine glycan.

The protein belongs to the pancreatic ribonuclease family.

It localises to the secreted. Does not exhibit any ribonuclease activity. This is Inactive ribonuclease-like protein 9 (RNASE9) from Macaca assamensis (Assam macaque).